Consider the following 401-residue polypeptide: Probable [pyruvate dehydrogenase (acetyl-transferring)] kinase, mitochondrial (401 aa).

In terms of domain architecture, Histidine kinase spans Leu-131–Pro-360. Residues Glu-247–Arg-254, Asp-286, Ser-305–Thr-306, and Gly-321–Leu-326 contribute to the ATP site.

Belongs to the PDK/BCKDK protein kinase family.

Its subcellular location is the mitochondrion matrix. The catalysed reaction is L-seryl-[pyruvate dehydrogenase E1 alpha subunit] + ATP = O-phospho-L-seryl-[pyruvate dehydrogenase E1 alpha subunit] + ADP + H(+). Functionally, inhibits the mitochondrial pyruvate dehydrogenase complex by phosphorylation of the E1 alpha subunit, thus contributing to the regulation of glucose metabolism. Required for normal lifespan. In Caenorhabditis elegans, this protein is Probable [pyruvate dehydrogenase (acetyl-transferring)] kinase, mitochondrial (pdhk-2).